We begin with the raw amino-acid sequence, 78 residues long: Exodeoxyribonuclease 7 small subunit (78 aa).

The protein belongs to the XseB family. In terms of assembly, heterooligomer composed of large and small subunits.

It is found in the cytoplasm. It catalyses the reaction Exonucleolytic cleavage in either 5'- to 3'- or 3'- to 5'-direction to yield nucleoside 5'-phosphates.. Bidirectionally degrades single-stranded DNA into large acid-insoluble oligonucleotides, which are then degraded further into small acid-soluble oligonucleotides. This Nocardia farcinica (strain IFM 10152) protein is Exodeoxyribonuclease 7 small subunit.